The sequence spans 253 residues: 5'/3'-nucleotidase SurE (253 aa).

4 residues coordinate a divalent metal cation: D8, D9, S39, and N92.

Belongs to the SurE nucleotidase family. A divalent metal cation is required as a cofactor.

It localises to the cytoplasm. The catalysed reaction is a ribonucleoside 5'-phosphate + H2O = a ribonucleoside + phosphate. It catalyses the reaction a ribonucleoside 3'-phosphate + H2O = a ribonucleoside + phosphate. The enzyme catalyses [phosphate](n) + H2O = [phosphate](n-1) + phosphate + H(+). Its function is as follows. Nucleotidase with a broad substrate specificity as it can dephosphorylate various ribo- and deoxyribonucleoside 5'-monophosphates and ribonucleoside 3'-monophosphates with highest affinity to 3'-AMP. Also hydrolyzes polyphosphate (exopolyphosphatase activity) with the preference for short-chain-length substrates (P20-25). Might be involved in the regulation of dNTP and NTP pools, and in the turnover of 3'-mononucleotides produced by numerous intracellular RNases (T1, T2, and F) during the degradation of various RNAs. The chain is 5'/3'-nucleotidase SurE from Cronobacter sakazakii (strain ATCC BAA-894) (Enterobacter sakazakii).